We begin with the raw amino-acid sequence, 546 residues long: Thermolysin (546 aa).

Positions 1-25 (MDKRAMLGAIGLAFGLMAWPFGASA) are cleaved as a signal peptide. Positions 26–228 (KEKSMVWNEQ…EAKPGGGQPV (203 aa)) are cleaved as a propeptide — activation peptide. Positions 287, 289, 291, and 368 each coordinate Ca(2+). His-372 is a binding site for Zn(2+). Glu-373 is a catalytic residue. Residues His-376 and Glu-396 each contribute to the Zn(2+) site. Residues Asn-413, Asp-415, Glu-417, Glu-420, Tyr-423, Thr-424, Ile-427, and Asp-430 each contribute to the Ca(2+) site. His-461 (proton donor) is an active-site residue.

This sequence belongs to the peptidase M4 family. The cofactor is Ca(2+). Zn(2+) serves as cofactor.

The protein resides in the secreted. It carries out the reaction Preferential cleavage: Xaa-|-Leu &gt; Xaa-|-Phe.. Functionally, extracellular zinc metalloprotease. In Bacillus caldolyticus, this protein is Thermolysin (npr).